Reading from the N-terminus, the 307-residue chain is MNEFWLQINIIVPAAGIDLVCHEMTELGSAGITVEERALDTFVVPDPDADIPETLILKVYFPPEIEPEQLARQVAERLAWLAPLIPGLEVVTPEISRVRAEDWAENWKQHFGIQRIGSRLVIRPTWEAFSPDPQDAVLTLDPGMAFGTGSHATTRLCLEALAELYETPPGPQRVLDVGTGSGILAVAAALLGAGQVLGCDIDETACQVALDNARQNGVIEQIAVTLDPLETLGGDFDVVLANILAEENARLAPELVHRLAPGGVLILSGILNEKEQLVIDAFAGRGLTGPDIRRQDEWSCLCYIKEA.

S-adenosyl-L-methionine is bound by residues Thr154, Gly178, Asp200, and Asn242.

Belongs to the methyltransferase superfamily. PrmA family.

It is found in the cytoplasm. It carries out the reaction L-lysyl-[protein] + 3 S-adenosyl-L-methionine = N(6),N(6),N(6)-trimethyl-L-lysyl-[protein] + 3 S-adenosyl-L-homocysteine + 3 H(+). In terms of biological role, methylates ribosomal protein L11. The chain is Ribosomal protein L11 methyltransferase from Syntrophotalea carbinolica (strain DSM 2380 / NBRC 103641 / GraBd1) (Pelobacter carbinolicus).